The chain runs to 90 residues: Accessory gland-specific peptide 26Ab (90 aa).

The N-terminal stretch at 1-21 (MNYFAVLCIFSCICFWQFSDA) is a signal peptide.

Main cells of the accessory glands of males.

It is found in the secreted. It localises to the extracellular space. This protein is transferred from male to female during mating and may affect egglaying and behavior after mating. The chain is Accessory gland-specific peptide 26Ab (Acp26Ab) from Drosophila simulans (Fruit fly).